The chain runs to 418 residues: MIDLKFLRENPDAVRASQRLRGEDPALVEVLLDADTARRAAISTADTLRAEQKAASKKVGKATPEERPALLAAASELAAQVKSAEAEQVVTEAAFTEAHKAISNVVIDGVPAGGEQDFALRELVGEPHPIENPKDHVELGESLGLFDMERGAKVSGARFYFLTGYGALLQLGLLQLAVQTAVANGFTLLIPPVLVKPEIMGGTGFLGAHADEVYHLEEDDLYLVGTSEVPIAGYHSGEILDLNNGPLRYAGWSSCFRREAGSYGKDTRGIIRVHQFDKVEAFVYCKPEDAEAEHEKILGWERQMLGHIEVPYRVIDVAAGDLGSSAARKFDCEAWVPTQRAYRELTSTSNCTTFQARRLAVRYRDESGKPQIAATLNGTLATTRWLVAILENHQQPDGSVRVPTALVPFVGTEVLEPK.

226 to 228 (TSE) lines the L-serine pocket. Residues 257-259 (RRE) and V273 contribute to the ATP site. Residue E280 participates in L-serine binding. 344–347 (ELTS) is an ATP binding site. Position 379 (T379) interacts with L-serine.

Belongs to the class-II aminoacyl-tRNA synthetase family. Type-1 seryl-tRNA synthetase subfamily. As to quaternary structure, homodimer. The tRNA molecule binds across the dimer.

The protein resides in the cytoplasm. It catalyses the reaction tRNA(Ser) + L-serine + ATP = L-seryl-tRNA(Ser) + AMP + diphosphate + H(+). It carries out the reaction tRNA(Sec) + L-serine + ATP = L-seryl-tRNA(Sec) + AMP + diphosphate + H(+). It participates in aminoacyl-tRNA biosynthesis; selenocysteinyl-tRNA(Sec) biosynthesis; L-seryl-tRNA(Sec) from L-serine and tRNA(Sec): step 1/1. In terms of biological role, catalyzes the attachment of serine to tRNA(Ser). Is also able to aminoacylate tRNA(Sec) with serine, to form the misacylated tRNA L-seryl-tRNA(Sec), which will be further converted into selenocysteinyl-tRNA(Sec). This is Serine--tRNA ligase from Mycobacteroides abscessus (strain ATCC 19977 / DSM 44196 / CCUG 20993 / CIP 104536 / JCM 13569 / NCTC 13031 / TMC 1543 / L948) (Mycobacterium abscessus).